The sequence spans 226 residues: Prolactin (226 aa).

Positions 1 to 29 are cleaved as a signal peptide; that stretch reads MNSQGSDRKAVTLLLLVMSNLLFCQNAHP. The cysteines at positions 33 and 38 are disulfide-linked. A phosphoserine mark is found at S53 and S117. 2 disulfide bridges follow: C85–C201 and C218–C226.

Belongs to the somatotropin/prolactin family. In terms of assembly, interacts with PRLR.

The protein localises to the secreted. Its function is as follows. Prolactin acts primarily on the mammary gland by promoting lactation. This chain is Prolactin (PRL), found in Mesocricetus auratus (Golden hamster).